The chain runs to 637 residues: Choline O-acetyltransferase (637 aa).

The segment covering 1 to 13 (MPVSKREQSKDTG) has biased composition (basic and acidic residues). The disordered stretch occupies residues 1 to 20 (MPVSKREQSKDTGDPCALPK). His329 serves as the catalytic Proton acceptor. Residues 407–419 (GKEF…MSPD), Ser445, and Gln545 each bind CoA.

This sequence belongs to the carnitine/choline acetyltransferase family.

It carries out the reaction choline + acetyl-CoA = acetylcholine + CoA. Catalyzes the reversible synthesis of acetylcholine (ACh) from acetyl CoA and choline at cholinergic synapses. This is Choline O-acetyltransferase (chat) from Danio rerio (Zebrafish).